Here is a 554-residue protein sequence, read N- to C-terminus: 2-succinyl-5-enolpyruvyl-6-hydroxy-3-cyclohexene-1-carboxylate synthase (554 aa).

The protein belongs to the TPP enzyme family. MenD subfamily. Homodimer. Mg(2+) is required as a cofactor. Mn(2+) serves as cofactor. It depends on thiamine diphosphate as a cofactor.

The catalysed reaction is isochorismate + 2-oxoglutarate + H(+) = 5-enolpyruvoyl-6-hydroxy-2-succinyl-cyclohex-3-ene-1-carboxylate + CO2. It participates in quinol/quinone metabolism; 1,4-dihydroxy-2-naphthoate biosynthesis; 1,4-dihydroxy-2-naphthoate from chorismate: step 2/7. Its pathway is quinol/quinone metabolism; menaquinone biosynthesis. In terms of biological role, catalyzes the thiamine diphosphate-dependent decarboxylation of 2-oxoglutarate and the subsequent addition of the resulting succinic semialdehyde-thiamine pyrophosphate anion to isochorismate to yield 2-succinyl-5-enolpyruvyl-6-hydroxy-3-cyclohexene-1-carboxylate (SEPHCHC). The sequence is that of 2-succinyl-5-enolpyruvyl-6-hydroxy-3-cyclohexene-1-carboxylate synthase from Mycobacterium tuberculosis (strain ATCC 25177 / H37Ra).